Here is a 427-residue protein sequence, read N- to C-terminus: 3-phosphoshikimate 1-carboxyvinyltransferase (427 aa).

3-phosphoshikimate-binding residues include lysine 20, serine 21, and arginine 25. Lysine 20 contributes to the phosphoenolpyruvate binding site. Phosphoenolpyruvate-binding residues include glycine 92 and arginine 120. The 3-phosphoshikimate site is built by serine 166, glutamine 168, aspartate 312, and lysine 339. Glutamine 168 provides a ligand contact to phosphoenolpyruvate. Aspartate 312 serves as the catalytic Proton acceptor. The phosphoenolpyruvate site is built by arginine 343 and arginine 385.

This sequence belongs to the EPSP synthase family. As to quaternary structure, monomer.

It localises to the cytoplasm. It carries out the reaction 3-phosphoshikimate + phosphoenolpyruvate = 5-O-(1-carboxyvinyl)-3-phosphoshikimate + phosphate. The protein operates within metabolic intermediate biosynthesis; chorismate biosynthesis; chorismate from D-erythrose 4-phosphate and phosphoenolpyruvate: step 6/7. In terms of biological role, catalyzes the transfer of the enolpyruvyl moiety of phosphoenolpyruvate (PEP) to the 5-hydroxyl of shikimate-3-phosphate (S3P) to produce enolpyruvyl shikimate-3-phosphate and inorganic phosphate. This chain is 3-phosphoshikimate 1-carboxyvinyltransferase, found in Streptococcus thermophilus (strain ATCC BAA-491 / LMD-9).